The chain runs to 92 residues: Actobindin-A (92 aa).

2 disordered regions span residues 1-33 (MSAP…IGSD) and 54-92 (LKHA…AADS). WH2 domains are found at residues 3 to 20 (APNP…LKHT) and 40 to 57 (DHAS…LKHA). Basic and acidic residues-rich tracts occupy residues 13-33 (KGAD…IGSD) and 54-64 (LKHAETDDKSA). The span at 68 to 79 (NENTTIKPNNHS) shows a compositional bias: polar residues.

Monomer.

Functionally, is able to bind two actin monomers at high concentrations of G-actin. Inhibits actin polymerization by sequestering G-actin and stabilizing actin dimers. The chain is Actobindin-A (abnA) from Dictyostelium discoideum (Social amoeba).